A 151-amino-acid chain; its full sequence is Guanylate kinase homolog (151 aa).

The region spanning 1 to 141 (MEREGVDYHY…AYSKLIQILQ (141 aa)) is the Guanylate kinase-like domain.

It belongs to the guanylate kinase family.

This is Guanylate kinase homolog from Vaccinia virus (strain Copenhagen) (VACV).